Here is a 322-residue protein sequence, read N- to C-terminus: uncharacterized protein (322 aa).

Helical transmembrane passes span 7–27, 54–74, 87–107, 128–148, 162–182, 209–229, 249–269, and 287–307; these read IQKI…IGAI, AFAL…LAMF, FVGF…LSGS, IAFC…ITFV, FLSV…YLLI, IGLT…LLPG, GIIS…LFLL, and VIYY…FELL.

This sequence to E.coli YbhN.

It is found in the cell membrane. This is an uncharacterized protein from Synechocystis sp. (strain ATCC 27184 / PCC 6803 / Kazusa).